The chain runs to 308 residues: Taste receptor type 2 member 41 (308 aa).

The Extracellular portion of the chain corresponds to 1–6 (MLSTVS). The helical transmembrane segment at 7–27 (VFFMSIFVLLCFLGILANGFI) threads the bilayer. Residues 28–60 (VLMLSREWLWRGRLLPSDMILLSLGTSRFCQQC) lie on the Cytoplasmic side of the membrane. A helical membrane pass occupies residues 61-81 (VGLVNSFYYSLHLVEYSRSLA). Over 82–90 (RQLISLHMD) the chain is Extracellular. The chain crosses the membrane as a helical span at residues 91 to 111 (FLNSATFWFGTWLSVLFCIKI). The Cytoplasmic portion of the chain corresponds to 112–128 (ANFSHPAFLWLKWRFPA). The helical transmembrane segment at 129–149 (LVPWLLLGSILVSFIVTLMFF) threads the bilayer. Residues 150 to 184 (WGNHTVYQAFLRRKFSGNTTFKEWNRRLEIDYFMP) lie on the Extracellular side of the membrane. 2 N-linked (GlcNAc...) asparagine glycosylation sites follow: asparagine 152 and asparagine 167. A helical transmembrane segment spans residues 185-205 (LKLVTTSIPCSLFLVSILLLI). At 206 to 239 (NSLRRHSQRMQHNAHSLQDPNTQAHSRALKSLIS) the chain is on the cytoplasmic side. Residues 240–260 (FLVLYALSYVSMVIDATVVIS) traverse the membrane as a helical segment. At 261–264 (SDNV) the chain is on the extracellular side. The chain crosses the membrane as a helical span at residues 265-285 (WYWPWQIILYLCMSVHPFILI). At 286 to 308 (TNNLKFRGTFRQLLLLARGFWVT) the chain is on the cytoplasmic side.

It belongs to the G-protein coupled receptor T2R family. In terms of tissue distribution, expressed in subsets of taste receptor cells of the tongue and palate epithelium and exclusively in gustducin-positive cells. Expressed in 15% taste bud cells in circumvallate and foliate papillae but only in 2% in fungiform papillae. Expressed in the duodenum, antrum and fundus (part of the stomach).

It localises to the membrane. Functionally, receptor that may play a role in the perception of bitterness and is gustducin-linked. May play a role in sensing the chemical composition of the gastrointestinal content. The activity of this receptor may stimulate alpha gustducin, mediate PLC-beta-2 activation and lead to the gating of TRPM5. This is Taste receptor type 2 member 41 (Tas2r41) from Rattus norvegicus (Rat).